Consider the following 269-residue polypeptide: Undecaprenyl-diphosphatase (269 aa).

8 helical membrane-spanning segments follow: residues 1–21 (MSIFQAIILGAVQGLAEFLPI), 39–59 (LPILFDILLHVATLAAVCTVF), 86–106 (LMMIAAIIVATAVTGVIGLLL), 112–132 (TIDIRLIPIFFIITGLLLIAS), 144–164 (VTLLTAAITGLAQGIGVIPGI), 184–204 (AGEFSFLLSIPAILAAFILEI), 210–230 (LLAGVSPISLISGMISAFVVG), and 249–269 (FAFYLIPLGLGLSIYFWGFAG).

The protein belongs to the UppP family.

It is found in the cell inner membrane. The catalysed reaction is di-trans,octa-cis-undecaprenyl diphosphate + H2O = di-trans,octa-cis-undecaprenyl phosphate + phosphate + H(+). Catalyzes the dephosphorylation of undecaprenyl diphosphate (UPP). Confers resistance to bacitracin. This chain is Undecaprenyl-diphosphatase, found in Treponema denticola (strain ATCC 35405 / DSM 14222 / CIP 103919 / JCM 8153 / KCTC 15104).